The chain runs to 316 residues: tRNA dimethylallyltransferase (316 aa).

19–26 (GPTASGKT) lines the ATP pocket. 21-26 (TASGKT) serves as a coordination point for substrate. Interaction with substrate tRNA stretches follow at residues 44–47 (DSAL), 168–172 (QRITR), and 249–254 (RCVGYR).

It belongs to the IPP transferase family. In terms of assembly, monomer. Requires Mg(2+) as cofactor.

It catalyses the reaction adenosine(37) in tRNA + dimethylallyl diphosphate = N(6)-dimethylallyladenosine(37) in tRNA + diphosphate. In terms of biological role, catalyzes the transfer of a dimethylallyl group onto the adenine at position 37 in tRNAs that read codons beginning with uridine, leading to the formation of N6-(dimethylallyl)adenosine (i(6)A). In Colwellia psychrerythraea (strain 34H / ATCC BAA-681) (Vibrio psychroerythus), this protein is tRNA dimethylallyltransferase.